Here is a 144-residue protein sequence, read N- to C-terminus: Large ribosomal subunit protein uL11 (144 aa).

This sequence belongs to the universal ribosomal protein uL11 family. Part of the ribosomal stalk of the 50S ribosomal subunit. Interacts with L10 and the large rRNA to form the base of the stalk. L10 forms an elongated spine to which L12 dimers bind in a sequential fashion forming a multimeric L10(L12)X complex. In terms of processing, one or more lysine residues are methylated.

Its function is as follows. Forms part of the ribosomal stalk which helps the ribosome interact with GTP-bound translation factors. The sequence is that of Large ribosomal subunit protein uL11 from Frankia alni (strain DSM 45986 / CECT 9034 / ACN14a).